The chain runs to 591 residues: MSLSPLNYADWEIAQAAEKHMKTVYDLGKDLGLDHKEIFPYGHYMGKVDYKSVLSRLEQSSDGKYIDVTAITPTPLGEGKSTTTIGLVQGLAKRGKRSSAAIRQPSGGPTMGVKGSAAGGGLSQCIPLTQYSLGFTGDINAVMNAHNLSMVALTSRMQHERNYSDEKLYALSNMKRLDIDPTNIPMGWVMDFCCQSLRNIIIGIDGVSGKSDGYMMRSHFDIAVSSEVMAILAIAKDLKDFRQRISKIIVAYDKQGKAITTADLEVDGAMTAWMVEAINPNLIQSIEGQPIFVHAGPFANIAIGQSSVIADRLGLKLSEYHVTESGFGVDIGYEKFWNLKCHYSGLTPDAAVIVTTVRALKSHGGAPIPIPGRPLPKEYTEENVGYVEVGSANLIHHINTVKKSGVPPVVCINAFTTDTPSEIAKIRQLCELVGARVAVSKHWEYGGDGALELADAVIDACNEEKNFLPLYDWSLPLKERIEKIAFEVYGAEGVEFSEEAIYKLNKLQADNNSSDLGVCMVKTHLSLSDDPKQKGVPDHWKLHVRDIMFFGGAGFVVPIAGSITLMPGTGSNPSFRRIDVDTDTGKVKGIF.

74–81 (TPLGEGKS) is a binding site for ATP.

It belongs to the formate--tetrahydrofolate ligase family.

It catalyses the reaction (6S)-5,6,7,8-tetrahydrofolate + formate + ATP = (6R)-10-formyltetrahydrofolate + ADP + phosphate. It functions in the pathway one-carbon metabolism; tetrahydrofolate interconversion. The sequence is that of Formate--tetrahydrofolate ligase from Lawsonia intracellularis (strain PHE/MN1-00).